Consider the following 839-residue polypeptide: Small conductance calcium-activated potassium channel protein 2 (839 aa).

4 disordered regions span residues 1-33, 64-115, 195-258, and 280-375; these read MPIV…QESP, QRGF…QQPG, ALRQ…RRES, and SNLS…KKNQ. Composition is skewed to low complexity over residues 198–212 and 219–235; these read QQYA…QYHQ and ATSP…GPPL. Basic residues predominate over residues 236–253; sequence SHHHHHPHPAHHQHHQPQ. Low complexity predominate over residues 313–326; that stretch reads SSPSAAAAASSSAP. Positions 345–363 are enriched in gly residues; the sequence is GTGGGGSTGGGGGGSGHGS. Residues 398–418 form a helical membrane-spanning segment; sequence ALIFGMFGIVVMVIETELSWG. At Y420 the chain carries Phosphotyrosine. The chain crosses the membrane as a helical span at residues 428-448; that stretch reads LALKCLISLSTIILLGLIIVY. Residues 474 to 494 traverse the membrane as a helical segment; the sequence is IFFICLEILVCAIHPIPGNYT. Residues 516 to 536 traverse the membrane as a helical segment; sequence IILSIPMFLRLYLIARVMLLH. A helical membrane pass occupies residues 565–585; that stretch reads LMTICPGTVLLVFSISLWIIA. An intramembrane region (pore-forming) is located at residues 605-625; sequence FLGAMWLISITFLSIGYGDMV. Residues 634 to 654 traverse the membrane as a helical segment; that stretch reads VCLLTGIMGAGCTALVVAVVA. The tract at residues 672 to 748 is calmodulin-binding; it reads DTQLTKRVKN…LVDLAKTQNI (77 aa). A compositionally biased stretch (basic and acidic residues) spans 810–819; sequence HVSYNAERSR. Residues 810-839 form a disordered region; that stretch reads HVSYNAERSRSSSRRRRSSSTAPPTSSESS. Residues 828–839 are compositionally biased toward low complexity; that stretch reads SSTAPPTSSESS.

Belongs to the potassium channel KCNN family. KCa2.2/KCNN2 subfamily. In terms of assembly, homodimer. Heteromultimer with KCNN1 and KCNN3. The complex is composed of 4 channel subunits each of which binds to a calmodulin subunit which regulates the channel activity through calcium-binding. Interacts (via N-terminal domain) with MPP2. In terms of tissue distribution, expressed in atrial and ventricular myocytes with higher levels in atrial myocytes (at protein level). Highly expressed in brain, liver and colon with low levels in kidney and testis. In colon, detected in smooth muscle cells.

It is found in the membrane. The protein resides in the cytoplasm. The protein localises to the myofibril. It localises to the sarcomere. Its subcellular location is the z line. It carries out the reaction K(+)(in) = K(+)(out). Inhibited by bee venom neurotoxin apamin. Inhibited by UCL 1684 and tetraethylammonium (TEA). In terms of biological role, small conductance calcium-activated potassium channel that mediates the voltage-independent transmembrane transfer of potassium across the cell membrane through a constitutive interaction with calmodulin which binds the intracellular calcium allowing its opening. The current is characterized by a voltage-independent activation, an intracellular calcium concentration increase-dependent activation and a single-channel conductance of about 3 picosiemens. Also presents an inwardly rectifying current, thus reducing its already small outward conductance of potassium ions, which is particularly the case when the membrane potential displays positive values, above + 20 mV. The inward rectification could be due to a blockade of the outward current by intracellular divalent cations such as calcium and magnesium and could also be due to an intrinsic property of the channel pore, independent of intracellular divalent ions. There are three positively charged amino acids in the S6 transmembrane domain, close to the pore, that collectively control the conductance and rectification through an electrostatic mechanism. Additionally, electrostatic contributions from these residues also play an important role in determining the intrinsic open probability of the channel in the absence of calcium, affecting the apparent calcium affinity for activation. Forms an heteromeric complex with calmodulin, which is constitutively associated in a calcium-independent manner. Channel opening is triggered when calcium binds the calmodulin resulting in a rotary movement leading to the formation of the dimeric complex to open the gate. Plays a role in the repolarization phase of cardiac action potential. The chain is Small conductance calcium-activated potassium channel protein 2 from Mus musculus (Mouse).